We begin with the raw amino-acid sequence, 265 residues long: Eukaryotic translation initiation factor 3 subunit J (265 aa).

2 disordered regions span residues 1 to 113 (MPPS…DSDL) and 215 to 237 (SNEKMKEERAADKGSKKTKAAKT). Acidic residues predominate over residues 27 to 45 (DEEDGDVLDSWDAADDSEV). A coiled-coil region spans residues 43-95 (SEVEREKAAKAAEAKAKAEAEAAANKKSKAQRIAEHKTRRKAAEDEEDDESDE). Positions 46–62 (EREKAAKAAEAKAKAEA) are enriched in basic and acidic residues. A compositionally biased stretch (acidic residues) spans 86 to 97 (EDEEDDESDEDE). Composition is skewed to basic and acidic residues over residues 98-113 (AEKRARLRRTEKDSDL) and 217-229 (EKMKEERAADKGS).

Belongs to the eIF-3 subunit J family. As to quaternary structure, component of the eukaryotic translation initiation factor 3 (eIF-3) complex.

It is found in the cytoplasm. Its function is as follows. Component of the eukaryotic translation initiation factor 3 (eIF-3) complex, which is involved in protein synthesis of a specialized repertoire of mRNAs and, together with other initiation factors, stimulates binding of mRNA and methionyl-tRNAi to the 40S ribosome. The eIF-3 complex specifically targets and initiates translation of a subset of mRNAs involved in cell proliferation. The polypeptide is Eukaryotic translation initiation factor 3 subunit J (hcr1) (Emericella nidulans (strain FGSC A4 / ATCC 38163 / CBS 112.46 / NRRL 194 / M139) (Aspergillus nidulans)).